The chain runs to 1036 residues: Putative GPI-anchored protein pfl2 (1036 aa).

The N-terminal stretch at 1 to 23 (MKFFTASTLFLLAAQSLNSGVSA) is a signal peptide. 25 N-linked (GlcNAc...) asparagine glycosylation sites follow: Asn66, Asn97, Asn165, Asn201, Asn233, Asn259, Asn277, Asn296, Asn312, Asn331, Asn347, Asn363, Asn379, Asn395, Asn410, Asn429, Asn445, Asn461, Asn477, Asn493, Asn509, Asn524, Asn543, Asn559, and Asn573. 2 disordered regions span residues 88 to 130 (SSSL…SSLA) and 147 to 183 (SSLASSSTTSSSLASSSTNSTTSATPTSSATSSSLSS). Residues 243 to 585 (SSISSTVSSS…ITSSASGSTG (343 aa)) are compositionally biased toward low complexity. Residues 243–710 (SSISSTVSSS…PLSNSTVAPT (468 aa)) are disordered. Polar residues predominate over residues 586 to 595 (EFTNTNSGNG). Over residues 597–630 (VSGSVTTPTSTPLSNSTVAPTSTFTSSGFNTTSG) the composition is skewed to low complexity. Asn611, Asn626, Asn642, Asn657, Asn673, Asn688, Asn704, Asn719, and Asn735 each carry an N-linked (GlcNAc...) asparagine glycan. Polar residues predominate over residues 631-647 (LPTSSASTPLSNSTVAP). A compositionally biased stretch (low complexity) spans 648-692 (TSTFTSSGFNTTSGLPTSSASTPSSNSSIVPTSTFTSSGFNTTSG). The span at 693–709 (LPTSSASTPLSNSTVAP) shows a compositional bias: polar residues. Low complexity-rich tracts occupy residues 722 to 831 (SGLP…TTAS), 838 to 862 (PTAAPTNEPTVTTGTETTEGTATYT), and 885 to 906 (IPVNPGNPSSSVSAPPTTSFTP). Disordered regions lie at residues 722-862 (SGLP…ATYT) and 885-918 (IPVNPGNPSSSVSAPPTTSFTPGPGGSGYPSYSN). Asn918, Asn924, Asn930, Asn933, Asn939, Asn947, and Asn977 each carry an N-linked (GlcNAc...) asparagine glycan. The disordered stretch occupies residues 978–1011 (TTATSGSDDDVKTASTSSSTSYTSSSSSSSSTTS). The span at 990–1011 (TASTSSSTSYTSSSSSSSSTTS) shows a compositional bias: low complexity. Ser1011 carries the GPI-anchor amidated serine lipid modification. The propeptide at 1012–1036 (AASSKASVSMGLNGLMIAAVILLVA) is removed in mature form.

It is found in the cell membrane. Functionally, may be involved in agglutination during conjugation or other aspects of colony formation. Induces flocculation when overexpressed. The polypeptide is Putative GPI-anchored protein pfl2 (Schizosaccharomyces pombe (strain 972 / ATCC 24843) (Fission yeast)).